The sequence spans 470 residues: Nitric oxide synthase, inducible (470 aa).

The L-arginine site is built by W2, Y3, and E7. 3 residues coordinate (6R)-L-erythro-5,6,7,8-tetrahydrobiopterin: R11, W93, and F106. Y121 lines the heme b pocket. The calmodulin-binding stretch occupies residues 145–165 (FKAVARAALFSSTLMSRVLAN). Residues 169–307 (CTVLYATETG…AFSAWALTAL (139 aa)) enclose the Flavodoxin-like domain. The FMN site is built by T175, E176, T177, K179, S180, S221, T222, S258, C265, E291, and Q295. R380 contributes to the NADP(+) binding site. H403 lines the FAD pocket. Residue T440 coordinates NADP(+).

This sequence belongs to the NOS family. In terms of assembly, homodimer. Heme b serves as cofactor. FAD is required as a cofactor. It depends on FMN as a cofactor. Requires (6R)-L-erythro-5,6,7,8-tetrahydrobiopterin as cofactor.

The protein localises to the cytoplasm. The protein resides in the cytosol. It catalyses the reaction 2 L-arginine + 3 NADPH + 4 O2 + H(+) = 2 L-citrulline + 2 nitric oxide + 3 NADP(+) + 4 H2O. With respect to regulation, not stimulated by calcium/calmodulin. Produces nitric oxide (NO) which is a messenger molecule with diverse functions throughout the body. In macrophages, NO mediates tumoricidal and bactericidal actions. Also has nitrosylase activity and mediates cysteine S-nitrosylation of cytoplasmic target proteins such COX2. This is Nitric oxide synthase, inducible (nos2) from Oncorhynchus mykiss (Rainbow trout).